The chain runs to 379 residues: Heme chaperone HemW (379 aa).

Residues 1–233 (MKSAYIHIPF…MSKMEAHGIH (233 aa)) form the Radical SAM core domain. An S-adenosyl-L-methionine-binding site is contributed by Y5. Positions 11, 15, and 18 each coordinate [4Fe-4S] cluster. Residues G60, 61–62 (GT), E94, Q121, R133, and D158 contribute to the S-adenosyl-L-methionine site.

This sequence belongs to the anaerobic coproporphyrinogen-III oxidase family. HemW subfamily. Requires [4Fe-4S] cluster as cofactor.

It localises to the cytoplasm. Functionally, probably acts as a heme chaperone, transferring heme to an unknown acceptor. Binds one molecule of heme per monomer, possibly covalently. Binds 1 [4Fe-4S] cluster. The cluster is coordinated with 3 cysteines and an exchangeable S-adenosyl-L-methionine. This chain is Heme chaperone HemW, found in Bacillus subtilis (strain 168).